We begin with the raw amino-acid sequence, 77 residues long: Large ribosomal subunit protein uL24 (77 aa).

It belongs to the universal ribosomal protein uL24 family. Part of the 50S ribosomal subunit.

Functionally, one of two assembly initiator proteins, it binds directly to the 5'-end of the 23S rRNA, where it nucleates assembly of the 50S subunit. Its function is as follows. One of the proteins that surrounds the polypeptide exit tunnel on the outside of the subunit. The polypeptide is Large ribosomal subunit protein uL24 (Campylobacter jejuni subsp. doylei (strain ATCC BAA-1458 / RM4099 / 269.97)).